The chain runs to 98 residues: Large ribosomal subunit protein bL28 (98 aa).

Belongs to the bacterial ribosomal protein bL28 family.

This is Large ribosomal subunit protein bL28 from Thermus thermophilus (strain ATCC BAA-163 / DSM 7039 / HB27).